We begin with the raw amino-acid sequence, 136 residues long: Small ribosomal subunit protein eS8 (136 aa).

This sequence belongs to the eukaryotic ribosomal protein eS8 family. In terms of assembly, part of the 30S ribosomal subunit.

The chain is Small ribosomal subunit protein eS8 (rps8e) from Aeropyrum pernix (strain ATCC 700893 / DSM 11879 / JCM 9820 / NBRC 100138 / K1).